A 30-amino-acid chain; its full sequence is MLDIISLGWGSLLAIFSFSIALVVWGRNGF.

The chain crosses the membrane as a helical span at residues 4 to 24 (IISLGWGSLLAIFSFSIALVV).

This sequence belongs to the PetN family. As to quaternary structure, the 4 large subunits of the cytochrome b6-f complex are cytochrome b6, subunit IV (17 kDa polypeptide, PetD), cytochrome f and the Rieske protein, while the 4 small subunits are PetG, PetL, PetM and PetN. The complex functions as a dimer.

It localises to the plastid. The protein localises to the chloroplast thylakoid membrane. Functionally, component of the cytochrome b6-f complex, which mediates electron transfer between photosystem II (PSII) and photosystem I (PSI), cyclic electron flow around PSI, and state transitions. The sequence is that of Cytochrome b6-f complex subunit 8 from Gracilaria tenuistipitata var. liui (Red alga).